The following is a 195-amino-acid chain: Putative NADH dehydrogenase/NAD(P)H nitroreductase Bcep18194_B1060 (195 aa).

This sequence belongs to the nitroreductase family. HadB/RutE subfamily. FMN is required as a cofactor.

This Burkholderia lata (strain ATCC 17760 / DSM 23089 / LMG 22485 / NCIMB 9086 / R18194 / 383) protein is Putative NADH dehydrogenase/NAD(P)H nitroreductase Bcep18194_B1060.